The sequence spans 223 residues: Immediate early response gene 2 protein (223 aa).

M1 is modified (N-acetylmethionine). The tract at residues 63 to 172 is disordered; that stretch reads AALPSDPRLH…PPAQAEGAFP (110 aa). Positions 69–78 are enriched in basic and acidic residues; sequence PRLHPPREAE. The span at 125 to 138 shows a compositional bias: low complexity; it reads SSLSDGGDAGLVPS.

Belongs to the IER family. As to expression, expressed in activated T-cells (at protein level). Expression increases in metastatic tumor cells (at protein level).

The protein localises to the cytoplasm. It is found in the nucleus. Its function is as follows. DNA-binding protein that seems to act as a transcription factor. Involved in the regulation of neuronal differentiation, acts upon JNK-signaling pathway activation and plays a role in neurite outgrowth in hippocampal cells. May mediate with FIBP FGF-signaling in the establishment of laterality in the embryo. Promotes cell motility, seems to stimulate tumor metastasis. The protein is Immediate early response gene 2 protein of Homo sapiens (Human).